A 655-amino-acid polypeptide reads, in one-letter code: Sphingomyelin phosphodiesterase 3 (655 aa).

At 1-10 (MVLYTTPFPN) the chain is on the cytoplasmic side. Residues 11 to 31 (SCLSALHAVSWALIFPCYWLV) constitute an intramembrane region (helical). The Cytoplasmic segment spans residues 32 to 64 (DRLLASFIPTTYEKRQRADDPCCLQLFCTVLFT). Residues cysteine 53, cysteine 54, and cysteine 59 are each lipidated (S-palmitoyl cysteine). The helical intramembrane region spans 65-85 (PVYLALLVAALPFAFLGFIFW). Residues 86-655 (SPLQSARRPY…LMVSAGEEEA (570 aa)) are Cytoplasmic-facing. Serine 178 is subject to Phosphoserine. Residues 209-318 (VEYKGDGGRH…SGGSGEPGAN (110 aa)) are disordered. Basic and acidic residues-rich tracts occupy residues 211–221 (YKGDGGRHPSD) and 246–255 (GGEEGGRPQE). At serine 289 the chain carries Phosphoserine. A Mg(2+)-binding site is contributed by glutamate 362. S-palmitoyl cysteine attachment occurs at residues cysteine 395 and cysteine 396. The active-site Proton acceptor is the histidine 639.

The protein belongs to the neutral sphingomyelinase family. Mg(2+) is required as a cofactor. Palmitoylated, palmitoylation-deficient proteins are targeted for lysosomal degradation. As to expression, predominantly expressed in brain (at protein level).

It localises to the golgi apparatus membrane. The protein localises to the cell membrane. It catalyses the reaction a sphingomyelin + H2O = phosphocholine + an N-acylsphing-4-enine + H(+). It carries out the reaction N-(15Z-tetracosenoyl)sphing-4-enine-1-phosphocholine + H2O = N-(15Z-tetracosenoyl)-sphing-4-enine + phosphocholine + H(+). The catalysed reaction is N-(tetracosanoyl)-sphing-4-enine-1-phosphocholine + H2O = N-tetracosanoyl-sphing-4-enine + phosphocholine + H(+). The enzyme catalyses N-(hexadecanoyl)-sphing-4-enine-1-phosphocholine + H2O = N-hexadecanoylsphing-4-enine + phosphocholine + H(+). It catalyses the reaction an N-(acyl)-sphingosylphosphocholine + H2O = an N-acyl-sphingoid base + phosphocholine + H(+). It carries out the reaction 1-hexadecanoyl-sn-glycero-3-phosphocholine + H2O = 1-hexadecanoyl-sn-glycerol + phosphocholine + H(+). The catalysed reaction is 1-O-octadecyl-sn-glycero-3-phosphocholine + H2O = 1-O-octadecyl-sn-glycerol + phosphocholine + H(+). The enzyme catalyses a sphingosylphosphocholine + H2O = a sphingoid base + phosphocholine + H(+). It functions in the pathway lipid metabolism; sphingolipid metabolism. Inhibited by nSMase inhibitor GW4869. Binding of anionic phospholipids (APLs) such as phosphatidylserine (PS) and phosphatidic acid (PA) increases enzymatic activity. In terms of biological role, catalyzes the hydrolysis of sphingomyelin to form ceramide and phosphocholine. Ceramide mediates numerous cellular functions, such as apoptosis and growth arrest, and is capable of regulating these 2 cellular events independently. Also hydrolyzes sphingosylphosphocholine. Regulates the cell cycle by acting as a growth suppressor in confluent cells. Probably acts as a regulator of postnatal development and participates in bone and dentin mineralization. Binds to anionic phospholipids (APLs) such as phosphatidylserine (PS) and phosphatidic acid (PA) that modulate enzymatic activity and subcellular location. May be involved in IL-1-beta-induced JNK activation in hepatocytes. May act as a mediator in transcriptional regulation of NOS2/iNOS via the NF-kappa-B activation under inflammatory conditions. The sequence is that of Sphingomyelin phosphodiesterase 3 from Mus musculus (Mouse).